The primary structure comprises 141 residues: High mobility group B protein 3 (141 aa).

Composition is skewed to basic and acidic residues over residues 1 to 12 (MKGAKSKAETRS) and 70 to 110 (GGEK…LEEG). 2 disordered regions span residues 1–40 (MKGAKSKAETRSTKLSVTKKPAKGAKGAAKDPNKPKRPSS) and 54–141 (KEEH…EDDD). The HMG box DNA-binding region spans 35-104 (PKRPSSAFFV…EYEKNMKAYN (70 aa)). The residue at position 122 (Ser-122) is a Phosphoserine. The span at 124–141 (VNDEDDAEDGSEEEEDDD) shows a compositional bias: acidic residues.

Belongs to the HMGB family. In terms of tissue distribution, expressed in lateral roots, root tips, stems, cotyledons, leaves and flowers (excluding ovary and pedicels).

The protein resides in the nucleus. The protein localises to the cytoplasm. It localises to the cytosol. Its function is as follows. Binds preferentially double-stranded DNA. The chain is High mobility group B protein 3 (HMGB3) from Arabidopsis thaliana (Mouse-ear cress).